We begin with the raw amino-acid sequence, 207 residues long: Abscisic acid receptor PYL9 (207 aa).

The tract at residues phenylalanine 31–glutamate 197 is START-like. Residues lysine 74, alanine 104–glutamate 109, arginine 131–serine 137, and glutamate 162 each bind abscisate. Residues serine 100–alanine 104 carry the Gate loop motif. Residues histidine 130–leucine 132 carry the Latch loop motif.

It belongs to the PYR/PYL/RCAR abscisic acid intracellular receptor family. Homodimer. Interacts with PP2C06. Interacts with PP2C50. Binding to PP2C50 is dependent on the presence of abscisic acid (ABA). Interacts with PP2C30 and PP2C53. Binding to PP2C30 and PP2C53 is dependent on the presence of ABA.

It is found in the cytoplasm. The protein localises to the cytosol. Its subcellular location is the nucleus. In terms of biological role, involved in abscisic acid (ABA) signaling during seed germination and abiotic stress response. Acts as a positive regulator of ABA-mediated inhibition of seed germination, and tolerance to drought and cold stresses. Inhibits the activity of the protein phosphatases PP2C06 and PP2C09 when activated by abscisic acid (ABA). The polypeptide is Abscisic acid receptor PYL9 (Oryza sativa subsp. japonica (Rice)).